The following is a 149-amino-acid chain: MAAALTRPPPGTVQCFGRKKTAVAVSYCKPGRGLIKVNGVPIELIRPEMLRLKAFEPILLAGRSRFKDIDMRIRVRGGGKTSQIYAIRQAIAKALVAYYQKYVDEASKKEVKDIFARYDRTLLVADPRRCEPKKFGGRGARARFQKSYR.

The protein belongs to the universal ribosomal protein uS9 family.

Its subcellular location is the cytoplasm. This is Small ribosomal subunit protein uS9 (RPS16A) from Oryza sativa subsp. indica (Rice).